A 201-amino-acid chain; its full sequence is 3-isopropylmalate dehydratase small subunit (201 aa).

It belongs to the LeuD family. LeuD type 1 subfamily. In terms of assembly, heterodimer of LeuC and LeuD.

It catalyses the reaction (2R,3S)-3-isopropylmalate = (2S)-2-isopropylmalate. Its pathway is amino-acid biosynthesis; L-leucine biosynthesis; L-leucine from 3-methyl-2-oxobutanoate: step 2/4. Its function is as follows. Catalyzes the isomerization between 2-isopropylmalate and 3-isopropylmalate, via the formation of 2-isopropylmaleate. The polypeptide is 3-isopropylmalate dehydratase small subunit (Brucella anthropi (strain ATCC 49188 / DSM 6882 / CCUG 24695 / JCM 21032 / LMG 3331 / NBRC 15819 / NCTC 12168 / Alc 37) (Ochrobactrum anthropi)).